The chain runs to 241 residues: DNA protection during starvation protein 2 (241 aa).

Positions 25–65 (GAQSAGNGVPSTNVNTPAPNTGQSTAQNTNTASPLPYNRAT) are disordered. Polar residues predominate over residues 33 to 57 (VPSTNVNTPAPNTGQSTAQNTNTAS). Residues His100, Asp127, and Glu131 each contribute to the Fe cation site. Residues 220-229 (TPTDPNTGFD) show a composition bias toward polar residues. The tract at residues 220–241 (TPTDPNTGFDINNGKPVPLRGR) is disordered.

This sequence belongs to the Dps family. As to quaternary structure, homododecamer. The 12 subunits form a hollow sphere into which the mineral iron core of up to 500 Fe(3+) can be deposited.

It localises to the cytoplasm. It carries out the reaction 2 Fe(2+) + H2O2 + 2 H(+) = 2 Fe(3+) + 2 H2O. Functionally, protects DNA from oxidative damage by sequestering intracellular Fe(2+) ion and storing it in the form of Fe(3+) oxyhydroxide mineral. One hydrogen peroxide oxidizes two Fe(2+) ions, which prevents hydroxyl radical production by the Fenton reaction. This chain is DNA protection during starvation protein 2 (dps2), found in Deinococcus radiodurans (strain ATCC 13939 / DSM 20539 / JCM 16871 / CCUG 27074 / LMG 4051 / NBRC 15346 / NCIMB 9279 / VKM B-1422 / R1).